Consider the following 139-residue polypeptide: MHEWALADAIVRTVLDYAQREGAKRVKAVRVVLGELQDVAEDIVKFAMEQMFAGTIAEGAEIIFEEEEAVFKCRNCGHTWKLKEVKDRFDERIKEDIHFIPEVVHAFLACPKCGSHDFEVVQGRGVYVAGIMIEKEGEA.

Ni(2+) is bound at residue His2. Zn(2+) contacts are provided by Cys73, Cys76, Cys110, and Cys113.

Belongs to the HypA/HybF family.

Its function is as follows. Involved in the maturation of [NiFe] hydrogenases. Required for nickel insertion into the metal center of the hydrogenase. This Thermococcus gammatolerans (strain DSM 15229 / JCM 11827 / EJ3) protein is Hydrogenase maturation factor HypA.